Here is a 740-residue protein sequence, read N- to C-terminus: Ethylene receptor 1 (740 aa).

Helical transmembrane passes span 23-43 (ISDF…IYFV), 53-73 (WVLV…LINL), and 95-115 (AAVS…LLSV). Cys-65 and His-69 together coordinate Cu cation. The GAF domain occupies 158–307 (DRHTILKTTL…VVADQVAVAL (150 aa)). The region spanning 350-587 (VMNHEMRTPM…TVTFVVKLGI (238 aa)) is the Histidine kinase domain. His-353 carries the phosphohistidine; by autocatalysis modification. Residues 615–732 (KVLLMDENGI…KMRNVLSKLL (118 aa)) form the Response regulatory domain. A 4-aspartylphosphate modification is found at Asp-663.

It belongs to the ethylene receptor family. As to quaternary structure, homodimer; disulfide-linked. Requires Cu cation as cofactor. Post-translationally, activation probably requires a transfer of a phosphate group between a His in the transmitter domain and an Asp of the receiver domain.

It localises to the endoplasmic reticulum membrane. The enzyme catalyses ATP + protein L-histidine = ADP + protein N-phospho-L-histidine.. Its function is as follows. May act early in the ethylene signal transduction pathway, possibly as an ethylene receptor, or as a regulator of the pathway. The protein is Ethylene receptor 1 (ETR1) of Pelargonium hortorum (Common geranium).